The primary structure comprises 141 residues: Large ribosomal subunit protein uL11 (141 aa).

Belongs to the universal ribosomal protein uL11 family. Part of the ribosomal stalk of the 50S ribosomal subunit. Interacts with L10 and the large rRNA to form the base of the stalk. L10 forms an elongated spine to which L12 dimers bind in a sequential fashion forming a multimeric L10(L12)X complex. Post-translationally, one or more lysine residues are methylated.

Its function is as follows. Forms part of the ribosomal stalk which helps the ribosome interact with GTP-bound translation factors. The polypeptide is Large ribosomal subunit protein uL11 (Microcystis aeruginosa (strain NIES-843 / IAM M-2473)).